We begin with the raw amino-acid sequence, 360 residues long: Ribosomal RNA large subunit methyltransferase M (360 aa).

S-adenosyl-L-methionine-binding positions include Ser187, 220–223, Asp239, Asp259, and Asp276; that span reads CPGG. Lys305 functions as the Proton acceptor in the catalytic mechanism.

It belongs to the class I-like SAM-binding methyltransferase superfamily. RNA methyltransferase RlmE family. RlmM subfamily. Monomer.

Its subcellular location is the cytoplasm. It carries out the reaction cytidine(2498) in 23S rRNA + S-adenosyl-L-methionine = 2'-O-methylcytidine(2498) in 23S rRNA + S-adenosyl-L-homocysteine + H(+). Catalyzes the 2'-O-methylation at nucleotide C2498 in 23S rRNA. The protein is Ribosomal RNA large subunit methyltransferase M of Photobacterium profundum (strain SS9).